A 79-amino-acid chain; its full sequence is Large ribosomal subunit protein bL31 (79 aa).

Belongs to the bacterial ribosomal protein bL31 family. Type A subfamily. Part of the 50S ribosomal subunit.

Its function is as follows. Binds the 23S rRNA. The polypeptide is Large ribosomal subunit protein bL31 (Nostoc sp. (strain PCC 7120 / SAG 25.82 / UTEX 2576)).